A 618-amino-acid polypeptide reads, in one-letter code: MGFTLKSLEFLQGVEPFRIDENHENEGASEEEEVLISAETDAGMSLMLEWKMRLSEDSDQCTTCNCPVDFGDRAVLLEHYQSLFHRTNTLRKARNMTVYTEEDFEGIENSENDLTSSQTTIGLESDDEEFDALLLPANRSFFIKNGSVFSVPRNILHVGERDVSSVTFLRPFDCAIFLWNGGHFAAAMFENDKMTVQKSFHRYVARAKQGGVQSQHDSGGKGAAKSAGAQLRRYNEQKMKEEIQSIMSSWKSRLQKTPLLFIRCAAYHRNIFFEADAGIETRDDRIRTIPFETKRPNIDEISDCWQRLQQVSEHGAESDFRAEMLEVREKRKKLARKVAGKKRKDGGMQMICEWSDDDENEDISKEKKTHHIKVRTIKKPEETVVQWPRLDDEWRQKTYNYVRQDSVEALKEHLASLNEDVTSEANDYLRNAKIPPNRSTFLHVSAANDARKCLKYFLEEVNCDSSTKDGAGLPPYSSSANSDVKSIFIDYRVKNETAGNWARTHIPEPKKKVELTEEQEREQAERKKEKKARQKEKEKLKKEIAKRDVEEMEERQKYVNMSEREKRALAVDRRLAGLPPILRCHQCGVQLPPTPFQYSHYNFCSTSCVAEHRKANPQ.

A C2H2-type zinc finger spans residues aspartate 59–histidine 85. Residues arginine 170 to valine 311 enclose the VLRF1 domain. Residue glutamine 213 is part of the active site. 2 ANK repeats span residues asparagine 437–serine 466 and glycine 470–glutamate 496. A disordered region spans residues alanine 502–lysine 539. Residues histidine 505 to leucine 515 are compositionally biased toward basic and acidic residues. Residues lysine 510–lysine 557 are a coiled coil.

This sequence belongs to the ANKZF1/VMS1 family. As to expression, in larval stages and in adults, expressed in intestinal cells, specific neurons in the head and the tail, and in the ventral nerve cord.

Its subcellular location is the cytoplasm. The protein localises to the mitochondrion. Its function is as follows. Endonuclease that cleaves polypeptidyl-tRNAs downstream of the ribosome-associated quality control (RQC) pathway to release incompletely synthesized polypeptides for degradation. The RQC pathway disassembles aberrantly stalled translation complexes to recycle or degrade the constituent parts. Dispensable for viability and growth but is required for protection against oxidative stress and for wild-type life span. This is tRNA endonuclease vms-1 (vms-1) from Caenorhabditis elegans.